We begin with the raw amino-acid sequence, 191 residues long: Ciliary microtubule-associated protein 3 (191 aa).

Interacts with proteins involved in ciliary transport, including ARL13B, CETN1, KIF3A, RAB6A, RAB8A, TUBB1 and TUBG1. Interacts with AURKA.

It localises to the cytoplasmic vesicle. It is found in the golgi apparatus. Its subcellular location is the trans-Golgi network. The protein resides in the cytoplasm. Functionally, during primary cilia disassembly, involved in cilia disassembly. Required specifically to control cilia retraction as well as the liberation and duplication of the basal body/centrosome. May act by stimulating AURKA activity at the basal body in a cell cycle-dependent manner. The polypeptide is Ciliary microtubule-associated protein 3 (Homo sapiens (Human)).